Consider the following 117-residue polypeptide: Prefoldin subunit beta (117 aa).

This sequence belongs to the prefoldin subunit beta family. As to quaternary structure, heterohexamer of two alpha and four beta subunits.

Its subcellular location is the cytoplasm. In terms of biological role, molecular chaperone capable of stabilizing a range of proteins. Seems to fulfill an ATP-independent, HSP70-like function in archaeal de novo protein folding. This is Prefoldin subunit beta from Thermococcus gammatolerans (strain DSM 15229 / JCM 11827 / EJ3).